We begin with the raw amino-acid sequence, 361 residues long: Alanine racemase 2 (361 aa).

The active-site Proton acceptor; specific for D-alanine is lysine 30. N6-(pyridoxal phosphate)lysine is present on lysine 30. Substrate is bound at residue arginine 122. Tyrosine 256 (proton acceptor; specific for L-alanine) is an active-site residue. Methionine 303 is a substrate binding site.

Belongs to the alanine racemase family. Pyridoxal 5'-phosphate is required as a cofactor.

The catalysed reaction is L-alanine = D-alanine. Its pathway is amino-acid biosynthesis; D-alanine biosynthesis; D-alanine from L-alanine: step 1/1. Functionally, catalyzes the interconversion of L-alanine and D-alanine. May also act on other amino acids. In Staphylococcus aureus (strain Mu50 / ATCC 700699), this protein is Alanine racemase 2 (alr2).